We begin with the raw amino-acid sequence, 290 residues long: ATP synthase gamma chain (290 aa).

Belongs to the ATPase gamma chain family. In terms of assembly, F-type ATPases have 2 components, CF(1) - the catalytic core - and CF(0) - the membrane proton channel. CF(1) has five subunits: alpha(3), beta(3), gamma(1), delta(1), epsilon(1). CF(0) has three main subunits: a, b and c.

It localises to the cell inner membrane. Its function is as follows. Produces ATP from ADP in the presence of a proton gradient across the membrane. The gamma chain is believed to be important in regulating ATPase activity and the flow of protons through the CF(0) complex. The protein is ATP synthase gamma chain of Erythrobacter litoralis (strain HTCC2594).